A 742-amino-acid polypeptide reads, in one-letter code: Protein CdcH (742 aa).

Residues 230–237 and 503–510 contribute to the ATP site; these read GPPGTGKT. The segment at 722–742 is disordered; that stretch reads FKGSQGPNVNSRQGSEHIGFQ. Over residues 723–734 the composition is skewed to polar residues; sequence KGSQGPNVNSRQ.

This sequence belongs to the AAA ATPase family. CDC48 subfamily.

Functionally, may be part of a transduction pathway connecting light to cell division. The polypeptide is Protein CdcH (cdcH) (Halobacterium salinarum (strain ATCC 700922 / JCM 11081 / NRC-1) (Halobacterium halobium)).